A 223-amino-acid chain; its full sequence is Probable tRNA-splicing endonuclease subunit tsp-1 (223 aa).

Residues 1–55 form a disordered region; sequence MESGSTPPTDKQIRENEQDGTGHQGKLLARPTSTRQQQQQQQQQPSHSVSQSVSQ. Positions 30 to 55 are enriched in low complexity; it reads RPTSTRQQQQQQQQQPSHSVSQSVSQ.

Belongs to the SEN15 family. TRNA splicing endonuclease is a heterotetramer composed of tsp-2/sen2, tsp-1/sen15, tsp-4/sen34 and tsp-5/sen54. Interacts directly with tsp-4/sen34.

Functionally, non-catalytic subunit of the tRNA-splicing endonuclease complex, a complex responsible for identification and cleavage of the splice sites in pre-tRNA. It cleaves pre-tRNA at the 5' and 3' splice sites to release the intron. The products are an intron and two tRNA half-molecules bearing 2',3' cyclic phosphate and 5'-OH termini. There are no conserved sequences at the splice sites, but the intron is invariably located at the same site in the gene, placing the splice sites an invariant distance from the constant structural features of the tRNA body. The chain is Probable tRNA-splicing endonuclease subunit tsp-1 (tsp-1) from Neurospora crassa (strain ATCC 24698 / 74-OR23-1A / CBS 708.71 / DSM 1257 / FGSC 987).